A 274-amino-acid polypeptide reads, in one-letter code: MPVRVIVDSSACLPTHVAEDLDITVINLHVMNNGEERSTSGLSSLELAASYARQLERGGDDGVLALHISKELSSTWSAAVTAAAVFDDDSVRVVDTSSLGMAVGAAAMAAARMAKDGASLQECYDIAVDTLKRSETWIYLHRIDEIWKSGRISTATAMVSTALATRPIMRFNGGRMEIAAKTRTQSKAFAKLVELAQIRADGEPVFIAIGQNEAREAAKQLEELLRNALPEGSSFMSVDIDPTLAVHSGPGAVSVSAVFANQAPELSTGKAGAK.

One can recognise a DegV domain in the interval 3–259; the sequence is VRVIVDSSAC…PGAVSVSAVF (257 aa). 2 residues coordinate hexadecanoate: T39 and S73.

Monomer.

Binds long-chain fatty acids, such as palmitate, and may play a role in lipid transport or fatty acid metabolism. The polypeptide is DegV domain-containing protein Cgl2349/cg2579 (Corynebacterium glutamicum (strain ATCC 13032 / DSM 20300 / JCM 1318 / BCRC 11384 / CCUG 27702 / LMG 3730 / NBRC 12168 / NCIMB 10025 / NRRL B-2784 / 534)).